The primary structure comprises 361 residues: Chorismate synthase (361 aa).

Residues R48 and R54 each contribute to the NADP(+) site. Residues 131 to 133 (RSS), 243 to 244 (NA), G287, 302 to 306 (KPTSS), and R328 contribute to the FMN site.

The protein belongs to the chorismate synthase family. As to quaternary structure, homotetramer. FMNH2 serves as cofactor.

It carries out the reaction 5-O-(1-carboxyvinyl)-3-phosphoshikimate = chorismate + phosphate. The protein operates within metabolic intermediate biosynthesis; chorismate biosynthesis; chorismate from D-erythrose 4-phosphate and phosphoenolpyruvate: step 7/7. Catalyzes the anti-1,4-elimination of the C-3 phosphate and the C-6 proR hydrogen from 5-enolpyruvylshikimate-3-phosphate (EPSP) to yield chorismate, which is the branch point compound that serves as the starting substrate for the three terminal pathways of aromatic amino acid biosynthesis. This reaction introduces a second double bond into the aromatic ring system. The polypeptide is Chorismate synthase (Bradyrhizobium sp. (strain BTAi1 / ATCC BAA-1182)).